Here is a 234-residue protein sequence, read N- to C-terminus: Small ribosomal subunit protein uS2c (234 aa).

It belongs to the universal ribosomal protein uS2 family.

The protein localises to the plastid. Its subcellular location is the chloroplast. This is Small ribosomal subunit protein uS2c (rps2) from Pinus koraiensis (Korean pine).